A 216-amino-acid chain; its full sequence is Adenylate kinase (216 aa).

Residue 10 to 15 participates in ATP binding; it reads GSGKGT. Positions 30–59 are NMP; it reads STGEILRKEIKKNKKTKKYIKKTINKGKLI. AMP contacts are provided by residues T31, R36, 57-59, 85-88, and Q92; these read KLI and GFPR. The LID stretch occupies residues 121–158; that stretch reads GRLIHASSGRTYHKIFNPPKIKNKDDITQEKLCSRNDD. ATP-binding positions include R122 and 131–132; that span reads TY. The AMP site is built by R155 and R166. Q196 contacts ATP.

The protein belongs to the adenylate kinase family. Monomer.

The protein localises to the cytoplasm. It catalyses the reaction AMP + ATP = 2 ADP. Its pathway is purine metabolism; AMP biosynthesis via salvage pathway; AMP from ADP: step 1/1. Catalyzes the reversible transfer of the terminal phosphate group between ATP and AMP. Plays an important role in cellular energy homeostasis and in adenine nucleotide metabolism. The protein is Adenylate kinase of Buchnera aphidicola subsp. Cinara cedri (strain Cc).